Reading from the N-terminus, the 472-residue chain is UDP-glycosyltransferase 2 (472 aa).

Residues serine 283, tryptophan 348–alanine 349, histidine 366–glutamate 374, and tyrosine 388–glutamine 391 contribute to the UDP-alpha-D-glucose site.

It belongs to the UDP-glycosyltransferase family. Highly expressed in roots. Expressed in leaves and stems.

Glycosyltransferase that possesses isoflavonoids 4'-O- and 7-O-glucosyltransferase activities. Shows a successive glucosylation toward the acceptors producing their corresponding 4',7-O-diglucosides. Can use genistein, formononetin, daidzein, liquiritigenin and naringenin as substrates. Also shows a 3'-O-glucosylation activity in vitro. In Pueraria montana var. lobata (Kudzu vine), this protein is UDP-glycosyltransferase 2.